We begin with the raw amino-acid sequence, 209 residues long: MTQKKHSPSSTRWLKEHFDDQYVKKAQKLGLRSRAVFKIDEIQGKDKLLKPGMTVVDLGAAPGGWSQFAIDQVGDKGRVIACDILPMDSIAGVDFLQGDFREETVLGALLERVGPDKVDVVMSDMAPNMSGTQQVDQARSMYLVELALDMCNQVLRANGSFVVKVFQGEGFDIYLNEIRKLFTAVKIRKPDSSRARSREVYIVATGFKL.

Residues Gly-63, Trp-65, Asp-83, Asp-99, and Asp-124 each contribute to the S-adenosyl-L-methionine site. Lys-164 acts as the Proton acceptor in catalysis.

It belongs to the class I-like SAM-binding methyltransferase superfamily. RNA methyltransferase RlmE family.

Its subcellular location is the cytoplasm. It carries out the reaction uridine(2552) in 23S rRNA + S-adenosyl-L-methionine = 2'-O-methyluridine(2552) in 23S rRNA + S-adenosyl-L-homocysteine + H(+). In terms of biological role, specifically methylates the uridine in position 2552 of 23S rRNA at the 2'-O position of the ribose in the fully assembled 50S ribosomal subunit. The polypeptide is Ribosomal RNA large subunit methyltransferase E (Aeromonas hydrophila subsp. hydrophila (strain ATCC 7966 / DSM 30187 / BCRC 13018 / CCUG 14551 / JCM 1027 / KCTC 2358 / NCIMB 9240 / NCTC 8049)).